The sequence spans 251 residues: Pyrroline-5-carboxylate reductase (251 aa).

This sequence belongs to the pyrroline-5-carboxylate reductase family.

The protein resides in the cytoplasm. It carries out the reaction L-proline + NADP(+) = (S)-1-pyrroline-5-carboxylate + NADPH + 2 H(+). The enzyme catalyses L-proline + NAD(+) = (S)-1-pyrroline-5-carboxylate + NADH + 2 H(+). The protein operates within amino-acid biosynthesis; L-proline biosynthesis; L-proline from L-glutamate 5-semialdehyde: step 1/1. In terms of biological role, catalyzes the reduction of 1-pyrroline-5-carboxylate (PCA) to L-proline. The chain is Pyrroline-5-carboxylate reductase (proC) from Methanobrevibacter smithii.